Reading from the N-terminus, the 428-residue chain is 26S proteasome regulatory subunit 7 (428 aa).

211-218 (GPPGTGKT) lines the ATP pocket.

This sequence belongs to the AAA ATPase family.

The protein localises to the cytoplasm. The protein resides in the nucleus. In terms of biological role, the 26S proteasome is involved in the ATP-dependent degradation of ubiquitinated proteins. The regulatory (or ATPase) complex confers ATP dependency and substrate specificity to the 26S complex. This Dictyostelium discoideum (Social amoeba) protein is 26S proteasome regulatory subunit 7 (psmC2).